A 228-amino-acid polypeptide reads, in one-letter code: Probable U3 small nucleolar RNA-associated protein 11 (228 aa).

Disordered regions lie at residues 1–23 and 192–211; these read MSSLRNAIPRPAHKERSQPEARK and SMQKELQKKGRKRKLRDDEL. Residues 12–23 are compositionally biased toward basic and acidic residues; the sequence is AHKERSQPEARK.

The protein belongs to the UTP11 family. In terms of assembly, component of the ribosomal small subunit (SSU) processome.

The protein resides in the nucleus. It localises to the nucleolus. In terms of biological role, involved in nucleolar processing of pre-18S ribosomal RNA. This chain is Probable U3 small nucleolar RNA-associated protein 11, found in Arabidopsis thaliana (Mouse-ear cress).